Here is a 1383-residue protein sequence, read N- to C-terminus: DNA-directed RNA polymerase subunit beta'' (1383 aa).

The Zn(2+) site is built by Cys220, Cys289, Cys296, and Cys299.

This sequence belongs to the RNA polymerase beta' chain family. RpoC2 subfamily. In terms of assembly, in plastids the minimal PEP RNA polymerase catalytic core is composed of four subunits: alpha, beta, beta', and beta''. When a (nuclear-encoded) sigma factor is associated with the core the holoenzyme is formed, which can initiate transcription. It depends on Zn(2+) as a cofactor.

The protein localises to the plastid. The protein resides in the chloroplast. The enzyme catalyses RNA(n) + a ribonucleoside 5'-triphosphate = RNA(n+1) + diphosphate. Functionally, DNA-dependent RNA polymerase catalyzes the transcription of DNA into RNA using the four ribonucleoside triphosphates as substrates. This chain is DNA-directed RNA polymerase subunit beta'', found in Oenothera biennis (German evening primrose).